The following is a 69-amino-acid chain: Brevinin-1CG1 (69 aa).

The N-terminal stretch at 1–22 is a signal peptide; the sequence is MFTMKKSLLLLFFLGTINLSLC. A propeptide spans 23–43 (removed in mature form); that stretch reads EQERNAEEERRDDDEMDVEVE. Cysteine 63 and cysteine 69 are oxidised to a cystine.

In terms of tissue distribution, expressed by the skin glands.

The protein resides in the secreted. Functionally, antimicrobial peptide. Active against Gram-positive bacteria R.rhodochrous X15 and B.licheniformis X39 and against Gram-negative bacterium E.coli ATCC 25922. Has antifungal activity against a slime mold isolate. Has weak hemolytic activity against human erythrocytes. This Amolops chunganensis (Chungan torrent frog) protein is Brevinin-1CG1.